A 217-amino-acid chain; its full sequence is MSSKVSRDTLYEAVREVLQGSKKKKRKFLETVELQISLKNYDPQKDKRFSGTVRLKSTPRPKFSLCVLGDQQHCDEAKAVDLPHMDIEALKKLNKNKKLVKKLAKKYDAFLASESLIKQIPRILGPGLNKAGKFPSLLTHNENLVAKVDEVKSTIKFQMKKVLCLAVAVGHVKLTEEELVYNIHLSINFLVSLLKKNWQNVRALYIKSTMGKPQRLY.

It belongs to the universal ribosomal protein uL1 family. In terms of assembly, component of the large ribosomal subunit.

It is found in the cytoplasm. Functionally, component of the large ribosomal subunit. The ribosome is a large ribonucleoprotein complex responsible for the synthesis of proteins in the cell. This chain is Large ribosomal subunit protein uL1 (rpl10a), found in Xenopus laevis (African clawed frog).